The following is a 314-amino-acid chain: Malate dehydrogenase (314 aa).

NAD(+) is bound by residues 11–16 and aspartate 35; that span reads GSGNIG. Positions 84 and 90 each coordinate substrate. NAD(+)-binding positions include asparagine 97 and 120–122; that span reads ITN. Residues asparagine 122 and arginine 153 each coordinate substrate. Histidine 177 functions as the Proton acceptor in the catalytic mechanism.

Belongs to the LDH/MDH superfamily. MDH type 3 family.

It carries out the reaction (S)-malate + NAD(+) = oxaloacetate + NADH + H(+). Catalyzes the reversible oxidation of malate to oxaloacetate. The protein is Malate dehydrogenase of Rickettsia typhi (strain ATCC VR-144 / Wilmington).